The primary structure comprises 302 residues: NAD kinase 2 (302 aa).

Asp78 (proton acceptor) is an active-site residue. Residues 78 to 79, 152 to 153, Asp182, 193 to 198, and Ala217 contribute to the NAD(+) site; these read DG, NE, and TAYALS.

The protein belongs to the NAD kinase family. A divalent metal cation is required as a cofactor.

It is found in the cytoplasm. The catalysed reaction is NAD(+) + ATP = ADP + NADP(+) + H(+). In terms of biological role, involved in the regulation of the intracellular balance of NAD and NADP, and is a key enzyme in the biosynthesis of NADP. Catalyzes specifically the phosphorylation on 2'-hydroxyl of the adenosine moiety of NAD to yield NADP. The protein is NAD kinase 2 of Prochlorococcus marinus (strain MIT 9313).